Here is a 116-residue protein sequence, read N- to C-terminus: Ribonuclease P protein component 2 (116 aa).

This sequence belongs to the eukaryotic/archaeal RNase P protein component 2 family. As to quaternary structure, consists of a catalytic RNA component and at least 4-5 protein subunits.

Its subcellular location is the cytoplasm. It catalyses the reaction Endonucleolytic cleavage of RNA, removing 5'-extranucleotides from tRNA precursor.. Its function is as follows. Part of ribonuclease P, a protein complex that generates mature tRNA molecules by cleaving their 5'-ends. In Methanosarcina mazei (strain ATCC BAA-159 / DSM 3647 / Goe1 / Go1 / JCM 11833 / OCM 88) (Methanosarcina frisia), this protein is Ribonuclease P protein component 2.